A 132-amino-acid chain; its full sequence is Small ribosomal subunit protein uS11 (132 aa).

Residues 1–16 are compositionally biased toward basic residues; it reads MAAGMKGKRSRRRKER. Residues 1–20 form a disordered region; that stretch reads MAAGMKGKRSRRRKERKNVE.

It belongs to the universal ribosomal protein uS11 family. In terms of assembly, part of the 30S ribosomal subunit. Interacts with proteins S7 and S18. Binds to IF-3.

In terms of biological role, located on the platform of the 30S subunit, it bridges several disparate RNA helices of the 16S rRNA. Forms part of the Shine-Dalgarno cleft in the 70S ribosome. The polypeptide is Small ribosomal subunit protein uS11 (Clostridium botulinum (strain Kyoto / Type A2)).